The sequence spans 367 residues: Quinolinate synthase (367 aa).

Residues His45 and Ser62 each coordinate iminosuccinate. Cys109 contributes to the [4Fe-4S] cluster binding site. Iminosuccinate contacts are provided by residues 140-142 and Ser161; that span reads YVN. Position 229 (Cys229) interacts with [4Fe-4S] cluster. Residues 255 to 257 and Thr272 contribute to the iminosuccinate site; that span reads HPE. Cys319 contacts [4Fe-4S] cluster.

Belongs to the quinolinate synthase family. Type 3 subfamily. Requires [4Fe-4S] cluster as cofactor.

The protein localises to the cytoplasm. The enzyme catalyses iminosuccinate + dihydroxyacetone phosphate = quinolinate + phosphate + 2 H2O + H(+). Its pathway is cofactor biosynthesis; NAD(+) biosynthesis; quinolinate from iminoaspartate: step 1/1. Functionally, catalyzes the condensation of iminoaspartate with dihydroxyacetone phosphate to form quinolinate. The chain is Quinolinate synthase from Geobacillus thermodenitrificans (strain NG80-2).